Here is a 141-residue protein sequence, read N- to C-terminus: Transcription antitermination protein NusB (141 aa).

The protein belongs to the NusB family.

Its function is as follows. Involved in transcription antitermination. Required for transcription of ribosomal RNA (rRNA) genes. Binds specifically to the boxA antiterminator sequence of the ribosomal RNA (rrn) operons. This Desulfotalea psychrophila (strain LSv54 / DSM 12343) protein is Transcription antitermination protein NusB.